The sequence spans 682 residues: Potassium-transporting ATPase ATP-binding subunit (682 aa).

4 helical membrane passes run 34-54 (PVMFIVWIGSLLTTCISIAMA), 62-82 (ALFSAAISGWLWITVLFANFA), 219-239 (IALTILLIALTIVFLLATATL), and 254-274 (VLVALLVCLIPTTIGGLLSAI). Asp-307 functions as the 4-aspartylphosphate intermediate in the catalytic mechanism. ATP-binding positions include Asp-344, Glu-348, 377–384 (FTAQSRMS), and Lys-395. Mg(2+)-binding residues include Asp-518 and Asp-522. 3 consecutive transmembrane segments (helical) span residues 588-608 (FAIIPAAFAATYPQLNALNIM), 616-636 (AILSAVIFNALIIVFLIPLAL), and 656-676 (IYGLGGLLVPFIGIKVIDLLL).

It belongs to the cation transport ATPase (P-type) (TC 3.A.3) family. Type IA subfamily. In terms of assembly, the system is composed of three essential subunits: KdpA, KdpB and KdpC.

The protein resides in the cell inner membrane. The catalysed reaction is K(+)(out) + ATP + H2O = K(+)(in) + ADP + phosphate + H(+). In terms of biological role, part of the high-affinity ATP-driven potassium transport (or Kdp) system, which catalyzes the hydrolysis of ATP coupled with the electrogenic transport of potassium into the cytoplasm. This subunit is responsible for energy coupling to the transport system and for the release of the potassium ions to the cytoplasm. The polypeptide is Potassium-transporting ATPase ATP-binding subunit (Escherichia coli (strain K12 / MC4100 / BW2952)).